The sequence spans 195 residues: Capsid protein (195 aa).

Residues asparagine 148–cysteine 195 are disordered. Residues valine 161 to serine 188 show a composition bias toward basic residues. Serine 167, serine 174, and serine 182 each carry phosphoserine; by host. The stretch at serine 167–threonine 172 is one 1; half-length repeat. Residues serine 167–serine 188 form a 3 X 7 AA repeats of S-P-R-R-R-[PR]-S region. Positions arginine 170–arginine 187 match the Bipartite nuclear localization signal motif. Repeat copies occupy residues serine 174–serine 180 and serine 182–serine 188. An RNA binding region spans residues glutamine 189–cysteine 195.

Belongs to the orthohepadnavirus core antigen family. As to quaternary structure, homodimerizes, then multimerizes. Interacts with cytosol exposed regions of viral L glycoprotein present in the reticulum-to-Golgi compartment. Interacts with human FLNB. Phosphorylated form interacts with host importin alpha; this interaction depends on the exposure of the NLS, which itself depends upon genome maturation and/or phosphorylation of the capsid protein. Interacts with host NUP153. In terms of processing, phosphorylated by host SRPK1, SRPK2, and maybe protein kinase C or GAPDH. Phosphorylation is critical for pregenomic RNA packaging. Protein kinase C phosphorylation is stimulated by HBx protein and may play a role in transport of the viral genome to the nucleus at the late step during the viral replication cycle.

It localises to the virion. Its subcellular location is the host cytoplasm. In terms of biological role, self assembles to form an icosahedral capsid. Most capsids appear to be large particles with an icosahedral symmetry of T=4 and consist of 240 copies of capsid protein, though a fraction forms smaller T=3 particles consisting of 180 capsid proteins. Entering capsids are transported along microtubules to the nucleus. Phosphorylation of the capsid is thought to induce exposure of nuclear localization signal in the C-terminal portion of the capsid protein that allows binding to the nuclear pore complex via the importin (karyopherin-) alpha and beta. Capsids are imported in intact form through the nuclear pore into the nuclear basket, where it probably binds NUP153. Only capsids that contain the mature viral genome can release the viral DNA and capsid protein into the nucleoplasm. Immature capsids get stuck in the basket. Capsids encapsulate the pre-genomic RNA and the P protein. Pre-genomic RNA is reverse-transcribed into DNA while the capsid is still in the cytoplasm. The capsid can then either be directed to the nucleus, providing more genomes for transcription, or bud through the endoplasmic reticulum to provide new virions. The chain is Capsid protein from Homo sapiens (Human).